We begin with the raw amino-acid sequence, 310 residues long: Methionyl-tRNA formyltransferase (310 aa).

Residue 110–113 (SVLP) participates in (6S)-5,6,7,8-tetrahydrofolate binding. The disordered stretch occupies residues 283–310 (TVQPPGKKSMNAADWARGARAEDIRRAR). The segment covering 299–310 (RGARAEDIRRAR) has biased composition (basic and acidic residues).

Belongs to the Fmt family.

The catalysed reaction is L-methionyl-tRNA(fMet) + (6R)-10-formyltetrahydrofolate = N-formyl-L-methionyl-tRNA(fMet) + (6S)-5,6,7,8-tetrahydrofolate + H(+). Functionally, attaches a formyl group to the free amino group of methionyl-tRNA(fMet). The formyl group appears to play a dual role in the initiator identity of N-formylmethionyl-tRNA by promoting its recognition by IF2 and preventing the misappropriation of this tRNA by the elongation apparatus. The polypeptide is Methionyl-tRNA formyltransferase (Mycolicibacterium gilvum (strain PYR-GCK) (Mycobacterium gilvum (strain PYR-GCK))).